Consider the following 659-residue polypeptide: Alpha-amylase (659 aa).

An N-terminal signal peptide occupies residues 1–27; it reads MFAKRFKTSLLPLFAGFLLLFHLVLAG. The propeptide occupies 28–41; it reads PAAASAETANKSNE. Ca(2+)-binding residues include Asn142, Thr178, Asp187, Gly210, and Asp212. Asp217 functions as the Nucleophile in the catalytic mechanism. A Ca(2+)-binding site is contributed by His221. The active-site Proton donor is Glu249.

Belongs to the glycosyl hydrolase 13 family. Monomer. Ca(2+) serves as cofactor.

The protein localises to the secreted. The enzyme catalyses Endohydrolysis of (1-&gt;4)-alpha-D-glucosidic linkages in polysaccharides containing three or more (1-&gt;4)-alpha-linked D-glucose units.. This Bacillus subtilis (strain 168) protein is Alpha-amylase (amyE).